Reading from the N-terminus, the 548-residue chain is Viridiflorene synthase (548 aa).

5 residues coordinate Mg(2+): aspartate 301, aspartate 305, aspartate 444, threonine 448, and glutamate 452. The short motif at 301–305 (DDTFD) is the DDXXD motif element.

Belongs to the terpene synthase family. Tpsa subfamily. Mg(2+) is required as a cofactor. As to expression, expressed in stem and leaf trichomes. Detected in roots, fruits and flowers.

It is found in the cytoplasm. The enzyme catalyses (2E,6E)-farnesyl diphosphate = viridiflorene + diphosphate. Its pathway is secondary metabolite biosynthesis; terpenoid biosynthesis. In terms of biological role, sesquiterpene synthase involved in the production of viridiflorene from (E,E)-farnesyl diphosphate. Can also use (Z,Z)-FPP to make several unidentified sesquiterpenes. This Solanum lycopersicum (Tomato) protein is Viridiflorene synthase.